The chain runs to 407 residues: Cathepsin D (407 aa).

Positions 1–20 (MQTPGVLLLILGLLDASSSA) are cleaved as a signal peptide. Residues 21–64 (LIRIPLRKFTSIRRTMTEVGGSVEDLILKGPITKYSMQSSPRTK) constitute a propeptide, activation peptide. Positions 79 to 402 (YYGEIGIGTP…DREYNRVGFA (324 aa)) constitute a Peptidase A1 domain. 2 disulfide bridges follow: Cys-91–Cys-160 and Cys-110–Cys-117. Residue Asp-97 is part of the active site. Residues Asn-134 and Asn-258 are each glycosylated (N-linked (GlcNAc...) asparagine). Cysteines 281 and 285 form a disulfide. Asp-290 is a catalytic residue. Cysteines 324 and 361 form a disulfide.

The protein belongs to the peptidase A1 family. Occurs as a mixture of both a single chain form and two types of two chain (light and heavy) forms. Interacts with ADAM30; this leads to activation of CTSD. In terms of processing, N- and O-glycosylated. Post-translationally, undergoes proteolytic cleavage and activation by ADAM30.

Its subcellular location is the lysosome. It is found in the melanosome. The protein localises to the secreted. It localises to the extracellular space. It catalyses the reaction Specificity similar to, but narrower than, that of pepsin A. Does not cleave the 4-Gln-|-His-5 bond in B chain of insulin.. Its function is as follows. Acid protease active in intracellular protein breakdown. Plays a role in APP processing following cleavage and activation by ADAM30 which leads to APP degradation. In Rattus norvegicus (Rat), this protein is Cathepsin D (Ctsd).